We begin with the raw amino-acid sequence, 124 residues long: uncharacterized protein (124 aa).

The protein resides in the cytoplasm. It localises to the nucleus. This is an uncharacterized protein from Schizosaccharomyces pombe (strain 972 / ATCC 24843) (Fission yeast).